The following is a 256-amino-acid chain: Small ribosomal subunit protein eS1 (256 aa).

N-acetylalanine; partial is present on A2.

This sequence belongs to the eukaryotic ribosomal protein eS1 family. Component of the small ribosomal subunit. Mature ribosomes consist of a small (40S) and a large (60S) subunit. The 40S subunit contains about 33 different proteins and 1 molecule of RNA (18S). The 60S subunit contains about 49 different proteins and 3 molecules of RNA (25S, 5.8S and 5S).

The protein resides in the cytoplasm. The protein is Small ribosomal subunit protein eS1 of Coprinopsis cinerea (strain Okayama-7 / 130 / ATCC MYA-4618 / FGSC 9003) (Inky cap fungus).